The primary structure comprises 532 residues: Chaperonin GroEL 2 (532 aa).

ATP contacts are provided by residues 30–33 (TLGP), lysine 51, 87–91 (DGTTT), glycine 415, 479–481 (NAA), and aspartate 495.

It belongs to the chaperonin (HSP60) family. In terms of assembly, forms a cylinder of 14 subunits composed of two heptameric rings stacked back-to-back. Interacts with the co-chaperonin GroES.

The protein resides in the cytoplasm. The catalysed reaction is ATP + H2O + a folded polypeptide = ADP + phosphate + an unfolded polypeptide.. Its function is as follows. Together with its co-chaperonin GroES, plays an essential role in assisting protein folding. The GroEL-GroES system forms a nano-cage that allows encapsulation of the non-native substrate proteins and provides a physical environment optimized to promote and accelerate protein folding. This Vibrio parahaemolyticus serotype O3:K6 (strain RIMD 2210633) protein is Chaperonin GroEL 2.